The sequence spans 274 residues: MEIKMAKDYGFCFGVKRAIQIAEKNQNSLIFGSLIHNAKEINRLEKNFNVKIEEDPKKIPKNKSVIIRTHGIPKQDLEYLKNKGVKITDATCPYVIKPQQIVESMSKEGYQIVLFGDINHPEVKGVISYATNQALVINSLEELQEKKLQRKVALVSQTTKQTPQLLQIASYLVERCTEVRIFNTICNATSYNQKAALDLSKEVDIMIVVGGKTSSNTKQLLSIAKQHCEDSYLVEDENELELAWFKNKKLCGITAGASTPDWIIENVKQKISTI.

Cys12 provides a ligand contact to [4Fe-4S] cluster. 2 residues coordinate (2E)-4-hydroxy-3-methylbut-2-enyl diphosphate: His36 and His70. Dimethylallyl diphosphate contacts are provided by His36 and His70. His36 and His70 together coordinate isopentenyl diphosphate. Cys92 is a [4Fe-4S] cluster binding site. His120 contributes to the (2E)-4-hydroxy-3-methylbut-2-enyl diphosphate binding site. His120 is a binding site for dimethylallyl diphosphate. Residue His120 coordinates isopentenyl diphosphate. Glu122 serves as the catalytic Proton donor. Residue Thr158 coordinates (2E)-4-hydroxy-3-methylbut-2-enyl diphosphate. Residue Cys186 coordinates [4Fe-4S] cluster. Positions 214, 215, 216, and 258 each coordinate (2E)-4-hydroxy-3-methylbut-2-enyl diphosphate. The dimethylallyl diphosphate site is built by Ser214, Ser215, Asn216, and Ser258. Isopentenyl diphosphate contacts are provided by Ser214, Ser215, Asn216, and Ser258.

This sequence belongs to the IspH family. Requires [4Fe-4S] cluster as cofactor.

It carries out the reaction isopentenyl diphosphate + 2 oxidized [2Fe-2S]-[ferredoxin] + H2O = (2E)-4-hydroxy-3-methylbut-2-enyl diphosphate + 2 reduced [2Fe-2S]-[ferredoxin] + 2 H(+). It catalyses the reaction dimethylallyl diphosphate + 2 oxidized [2Fe-2S]-[ferredoxin] + H2O = (2E)-4-hydroxy-3-methylbut-2-enyl diphosphate + 2 reduced [2Fe-2S]-[ferredoxin] + 2 H(+). The protein operates within isoprenoid biosynthesis; dimethylallyl diphosphate biosynthesis; dimethylallyl diphosphate from (2E)-4-hydroxy-3-methylbutenyl diphosphate: step 1/1. It functions in the pathway isoprenoid biosynthesis; isopentenyl diphosphate biosynthesis via DXP pathway; isopentenyl diphosphate from 1-deoxy-D-xylulose 5-phosphate: step 6/6. Functionally, catalyzes the conversion of 1-hydroxy-2-methyl-2-(E)-butenyl 4-diphosphate (HMBPP) into a mixture of isopentenyl diphosphate (IPP) and dimethylallyl diphosphate (DMAPP). Acts in the terminal step of the DOXP/MEP pathway for isoprenoid precursor biosynthesis. The sequence is that of 4-hydroxy-3-methylbut-2-enyl diphosphate reductase from Helicobacter pylori (strain Shi470).